The chain runs to 384 residues: S-adenosylmethionine synthase (384 aa).

An ATP-binding site is contributed by His-15. Position 17 (Asp-17) interacts with Mg(2+). Glu-43 contributes to the K(+) binding site. Residues Glu-56 and Gln-99 each contribute to the L-methionine site. The tract at residues Gln-99–Arg-109 is flexible loop. Residues Asp-164–Lys-166, Arg-230–Phe-231, Asp-239, Arg-245–Lys-246, Ala-262, and Lys-266 contribute to the ATP site. Residue Asp-239 coordinates L-methionine. Position 270 (Lys-270) interacts with L-methionine.

It belongs to the AdoMet synthase family. Homotetramer; dimer of dimers. Mg(2+) is required as a cofactor. Requires K(+) as cofactor.

The protein resides in the cytoplasm. The catalysed reaction is L-methionine + ATP + H2O = S-adenosyl-L-methionine + phosphate + diphosphate. Its pathway is amino-acid biosynthesis; S-adenosyl-L-methionine biosynthesis; S-adenosyl-L-methionine from L-methionine: step 1/1. In terms of biological role, catalyzes the formation of S-adenosylmethionine (AdoMet) from methionine and ATP. The overall synthetic reaction is composed of two sequential steps, AdoMet formation and the subsequent tripolyphosphate hydrolysis which occurs prior to release of AdoMet from the enzyme. In Edwardsiella ictaluri (strain 93-146), this protein is S-adenosylmethionine synthase.